Here is a 346-residue protein sequence, read N- to C-terminus: Signal recognition particle receptor FtsY (346 aa).

Residues glycine 143 to threonine 150, aspartate 225 to arginine 229, and threonine 289 to aspartate 292 contribute to the GTP site.

This sequence belongs to the GTP-binding SRP family. FtsY subfamily. In terms of assembly, part of the signal recognition particle protein translocation system, which is composed of SRP and FtsY.

Its subcellular location is the cell membrane. The protein localises to the cytoplasm. It carries out the reaction GTP + H2O = GDP + phosphate + H(+). Its function is as follows. Involved in targeting and insertion of nascent membrane proteins into the cytoplasmic membrane. Acts as a receptor for the complex formed by the signal recognition particle (SRP) and the ribosome-nascent chain (RNC). The chain is Signal recognition particle receptor FtsY from Mycoplasma genitalium (strain ATCC 33530 / DSM 19775 / NCTC 10195 / G37) (Mycoplasmoides genitalium).